Here is a 270-residue protein sequence, read N- to C-terminus: Protoheme IX farnesyltransferase (270 aa).

Helical transmembrane passes span 13–30 (LALL…LVPD), 33–53 (HATL…GSAL), 95–115 (LLVL…ALAW), 129–149 (LALA…WTLA), 156–176 (YRII…FWLF), 207–227 (LWLG…LMAP), and 249–269 (EATL…ALLL).

Belongs to the UbiA prenyltransferase family. Protoheme IX farnesyltransferase subfamily.

It localises to the cell inner membrane. It carries out the reaction heme b + (2E,6E)-farnesyl diphosphate + H2O = Fe(II)-heme o + diphosphate. It functions in the pathway porphyrin-containing compound metabolism; heme O biosynthesis; heme O from protoheme: step 1/1. Its function is as follows. Converts heme B (protoheme IX) to heme O by substitution of the vinyl group on carbon 2 of heme B porphyrin ring with a hydroxyethyl farnesyl side group. In Geobacter sulfurreducens (strain ATCC 51573 / DSM 12127 / PCA), this protein is Protoheme IX farnesyltransferase.